A 235-amino-acid chain; its full sequence is Deoxyribose-phosphate aldolase (235 aa).

D107 functions as the Proton donor/acceptor in the catalytic mechanism. Catalysis depends on K167, which acts as the Schiff-base intermediate with acetaldehyde. Catalysis depends on K197, which acts as the Proton donor/acceptor.

It belongs to the DeoC/FbaB aldolase family. DeoC type 1 subfamily. Homotetramer.

It is found in the cytoplasm. It catalyses the reaction 2-deoxy-D-ribose 5-phosphate = D-glyceraldehyde 3-phosphate + acetaldehyde. Its pathway is carbohydrate degradation; 2-deoxy-D-ribose 1-phosphate degradation; D-glyceraldehyde 3-phosphate and acetaldehyde from 2-deoxy-alpha-D-ribose 1-phosphate: step 2/2. Catalyzes a reversible aldol reaction between acetaldehyde and D-glyceraldehyde 3-phosphate to generate 2-deoxy-D-ribose 5-phosphate. This chain is Deoxyribose-phosphate aldolase, found in Aeropyrum pernix (strain ATCC 700893 / DSM 11879 / JCM 9820 / NBRC 100138 / K1).